Reading from the N-terminus, the 254-residue chain is Hydroxyacylglutathione hydrolase (254 aa).

Zn(2+)-binding residues include H53, H55, D57, H58, H111, D128, and H166.

It belongs to the metallo-beta-lactamase superfamily. Glyoxalase II family. Monomer. The cofactor is Zn(2+).

It catalyses the reaction an S-(2-hydroxyacyl)glutathione + H2O = a 2-hydroxy carboxylate + glutathione + H(+). Its pathway is secondary metabolite metabolism; methylglyoxal degradation; (R)-lactate from methylglyoxal: step 2/2. Its function is as follows. Thiolesterase that catalyzes the hydrolysis of S-D-lactoyl-glutathione to form glutathione and D-lactic acid. This Aeromonas salmonicida (strain A449) protein is Hydroxyacylglutathione hydrolase.